A 108-amino-acid chain; its full sequence is Kanamycin resistance protein (108 aa).

The N-acetyltransferase domain maps to 1 to 99; the sequence is SRTLLLERGR…PAVYMVQTRQ (99 aa).

The polypeptide is Kanamycin resistance protein (Rhizobium radiobacter (Agrobacterium tumefaciens)).